Here is a 29-residue protein sequence, read N- to C-terminus: MDSLTQKLTVLIAVLELLVALLRLIDLLK.

A helical membrane pass occupies residues 10–27; that stretch reads VLIAVLELLVALLRLIDL.

It is found in the membrane. In terms of biological role, toxic component of a type I toxin-antitoxin (TA) system. Overexpression leads to cell stasis and a decrease in colony-forming units. Probably repressed by cognate small RNA orzP. Base pairing occurs between 18 bases in the 5' UTR of zorP mRNA and the 5' end of OrzP sRNA. The sequence is that of Small toxic protein ZorP from Escherichia coli O157:H7.